The chain runs to 76 residues: Signal recognition particle 9 kDa protein (76 aa).

It belongs to the SRP9 family. In terms of assembly, heterodimer with SRP14; binds RNA as heterodimer. Component of a signal recognition particle complex that consists of a 7SL RNA molecule of 300 nucleotides and six protein subunits: srpa-72, srpa-68, SRP54, F37F2.2/SRP19, F25G6.8/SRP14 and ZK512.4/SRP9.

Its subcellular location is the cytoplasm. Component of the signal recognition particle (SRP) complex, a ribonucleoprotein complex that mediates the cotranslational targeting of secretory and membrane proteins to the endoplasmic reticulum (ER). SRP9 together with SRP14 and the Alu portion of the SRP RNA, constitutes the elongation arrest domain of SRP. The complex of SRP9 and SRP14 is required for SRP RNA binding. The polypeptide is Signal recognition particle 9 kDa protein (Caenorhabditis elegans).